Here is a 397-residue protein sequence, read N- to C-terminus: MVKETTYYDVLGVKPNATQEELKKAYRKLALKYHPDKNPNEGEKFKQISQAYEVLSDAKKRELYDKGGEQAIKEGGAGGGFGSPMDIFDMFFGGGGRMQRERRGKNVVHQLTVTLEDLYNGATRKLALQKNVICDKCEGRGGKKGAVECCPNCRGTGMQIRIHQIGPGMVQQIQSVCMECQGHGERISPKDRCKSCNGRKIVREKKILEVHIDKGMKDGQKITFHGEGDQEPGLEPGDIIIVLDQKDHAVFTRRGEDLFMCMDIQLVEALCGFQKPISTLDNRTIVITSHPGQIVKHGDIKCVLNEGMPIYRRPYEKGRLIIEFKVNFPENGFLSPDKLSLLEKLLPERKEVEETDEMDQVELVDFDPNQERRRHYNGEAYEDDEHHPRGGVQCQTS.

Residues 6–68 enclose the J domain; it reads TYYDVLGVKP…KKRELYDKGG (63 aa). K66 bears the N6-acetyllysine mark. S83 carries the phosphoserine modification. The CR-type zinc finger occupies 121 to 205; sequence GATRKLALQK…CNGRKIVREK (85 aa). The Zn(2+) site is built by C134, C137, C150, C153, C177, C180, C193, and C196. CXXCXGXG motif repeat units follow at residues 134 to 141, 150 to 157, 177 to 184, and 193 to 200; these read CDKCEGRG, CPNCRGTG, CMECQGHG, and CKSCNGRK. S335 is subject to Phosphoserine. A disordered region spans residues 352–397; sequence VEETDEMDQVELVDFDPNQERRRHYNGEAYEDDEHHPRGGVQCQTS. Residues 353–365 show a composition bias toward acidic residues; that stretch reads EETDEMDQVELVD. Phosphotyrosine is present on Y381. C394 carries the cysteine methyl ester modification. C394 carries the S-farnesyl cysteine lipid modification. The propeptide at 395 to 397 is removed in mature form; the sequence is QTS.

Identified in a complex with HSPA1B and BAX. Interacts with RNF207.

It localises to the membrane. The protein localises to the cytoplasm. It is found in the microsome. The protein resides in the mitochondrion. Its subcellular location is the nucleus. It localises to the perinuclear region. Functionally, co-chaperone for HSPA8/Hsc70. Plays a role in protein transport into mitochondria via its role as co-chaperone. Functions as co-chaperone for HSPA1B and negatively regulates the translocation of BAX from the cytosol to mitochondria in response to cellular stress, thereby protecting cells against apoptosis. Stimulates ATP hydrolysis, but not the folding of unfolded proteins mediated by HSPA1A (in vitro). Promotes apoptosis in response to cellular stress mediated by exposure to anisomycin or UV. In Bos taurus (Bovine), this protein is DnaJ homolog subfamily A member 1 (DNAJA1).